Reading from the N-terminus, the 289-residue chain is Phosphate import ATP-binding protein PstB (289 aa).

The disordered stretch occupies residues 1-37 (MRSIDRPGGQAARPTIGSVAGASNTRTRDARSLPDTP). The ABC transporter domain occupies 41–284 (AAAENFSFYY…PVRRETEDYI (244 aa)). 73-80 (GPSGCGKS) is an ATP binding site.

The protein belongs to the ABC transporter superfamily. Phosphate importer (TC 3.A.1.7) family. In terms of assembly, the complex is composed of two ATP-binding proteins (PstB), two transmembrane proteins (PstC and PstA) and a solute-binding protein (PstS).

It is found in the cell inner membrane. It carries out the reaction phosphate(out) + ATP + H2O = ADP + 2 phosphate(in) + H(+). In terms of biological role, part of the ABC transporter complex PstSACB involved in phosphate import. Responsible for energy coupling to the transport system. In Aromatoleum aromaticum (strain DSM 19018 / LMG 30748 / EbN1) (Azoarcus sp. (strain EbN1)), this protein is Phosphate import ATP-binding protein PstB.